A 279-amino-acid polypeptide reads, in one-letter code: Universal stress protein MT2087 (279 aa).

This sequence belongs to the universal stress protein A family.

In Mycobacterium tuberculosis (strain CDC 1551 / Oshkosh), this protein is Universal stress protein MT2087.